Consider the following 875-residue polypeptide: MDMASLISSLLVLFLIFQNSCYCFRSPLSVFKRYEESTRSLSNDCLGTTRPVMSPGSSDYTLDIRMPGVTPTESDTYLCKSYRLPVDDEAYVVDYRPHANMDTAHHMLLFGCNVPSSTDDYWDCSAGTCNDKSSIMYAWAKNAPPTKLPEGVGFQVGGKSGSRYFVLQVHYGDVKAFQDKHKDCTGVTVRITPEKQPLIAGIYLSMSLNTVVPPGQEVVNSDIACLYNRPTIHPFAYRVHTHQLGQVVSGFRVRHGKWTLIGRQSPQLPQAFYPVEHPLEISPGDIIATRCLFTGKGRMSATYIGGTAKDEMCNLYIMYYMDAAHATSYMTCVQTGNPKLFENIPEIANVPIPVSPDMMMMMMMGHGHHHTEAEAETNTALQQPKREEEEVLNQDVHLEEDTDWPGVNLKVGQVSGLALDPKNNLVIFHRGDHVWDENSFDRNFVYQQRGIGPIQESTILVVDPNTSKVLKSTGQNLFFLPHGLTIDRDGNYWVTDVALHQVFKVGAEKETPLLVLGRAFQPGSDRKHFCQPTDVAVDPITGNFFVADGYCNSRIMQFSPNGMFIMQWGEETSSNLPRPGQFRIPHSLTMISDQGQLCVADRENGRIQCFHAKTGEFVKQIKHQEFGREVFAVSYAPGGVLYAVNGKPYYGDSTPVQGFMLNFSNGDILDTFIPARKNFEMPHDIAAGDDGTVYVGDAHANAVWKFSPSKAEHRSVKKAGIEVEEITETEIFETHMRSRPKTNESVGQQTQEKPSVVQESSAGVSFVLIITLLIIPVVVLIAIAIFIRWRKVRMYGGDIGHKSESSSGGILGKLRGKGSGGLNLGTFFATHKGYSRKGFDRLSTEGSDQEKDDDDDGSDSEEEYSAPPIPPVSSS.

The signal sequence occupies residues 1–39 (MDMASLISSLLVLFLIFQNSCYCFRSPLSVFKRYEESTR). Positions 3 to 394 (MASLISSLLV…KREEEEVLNQ (392 aa)) are peptidylglycine alpha-hydroxylating monooxygenase. The Intragranular segment spans residues 40–763 (SLSNDCLGTT…PSVVQESSAG (724 aa)). 5 disulfide bridges follow: Cys-45–Cys-184, Cys-79–Cys-124, Cys-112–Cys-129, Cys-225–Cys-332, and Cys-291–Cys-313. Residues His-105 and His-106 each contribute to the Cu(2+) site. His-170, His-240, His-242, and Met-312 together coordinate Cu(2+). Residues 395-716 (DVHLEEDTDW…SPSKAEHRSV (322 aa)) form a peptidyl-alpha-hydroxyglycine alpha-amidating lyase region. Residue Arg-430 coordinates a protein. Residue Asn-465 is glycosylated (N-linked (GlcNAc...) asparagine). 3 NHL repeats span residues 467–508 (SKVL…VGAE), 516–561 (LGRA…FSPN), and 569–613 (GEET…FHAK). 2 cysteine pairs are disulfide-bonded: Cys-530-Cys-551 and Cys-598-Cys-609. A protein contacts are provided by Tyr-550 and Arg-602. N-linked (GlcNAc...) asparagine glycosylation occurs at Asn-662. An NHL 4 repeat occupies 666–709 (GDILDTFIPARKNFEMPHDIAAGDDGTVYVGDAHANAVWKFSPS). Positions 735–755 (HMRSRPKTNESVGQQTQEKPS) are disordered. N-linked (GlcNAc...) asparagine glycosylation occurs at Asn-743. Polar residues predominate over residues 743 to 755 (NESVGQQTQEKPS). A helical membrane pass occupies residues 764 to 787 (VSFVLIITLLIIPVVVLIAIAIFI). At 788–875 (RWRKVRMYGG…APPIPPVSSS (88 aa)) the chain is on the cytoplasmic side. Residues 837 to 875 (KGFDRLSTEGSDQEKDDDDDGSDSEEEYSAPPIPPVSSS) are disordered. Over residues 850–864 (EKDDDDDGSDSEEEY) the composition is skewed to acidic residues.

It in the C-terminal section; belongs to the peptidyl-alpha-hydroxyglycine alpha-amidating lyase family. The protein in the N-terminal section; belongs to the copper type II ascorbate-dependent monooxygenase family. As to quaternary structure, monomer. Zn(2+) is required as a cofactor. It depends on Cu(2+) as a cofactor.

The protein resides in the cytoplasmic vesicle. It is found in the secretory vesicle membrane. It catalyses the reaction a [peptide]-C-terminal glycine + 2 L-ascorbate + O2 = a [peptide]-C-terminal (2S)-2-hydroxyglycine + 2 monodehydro-L-ascorbate radical + H2O. The catalysed reaction is a [peptide]-C-terminal (2S)-2-hydroxyglycine = a [peptide]-C-terminal amide + glyoxylate. Functionally, bifunctional enzyme that catalyzes amidation of the C-terminus of proteins. Alpha-amidation is present at the C-terminus of many endocrine hormones and neuropeptides and is required for their activity. C-terminal amidation also takes place in response to protein fragmentation triggered by oxidative stress, promoting degradation of amidated protein fragments by the proteasome. Alpha-amidation involves two sequential reactions, both of which are catalyzed by separate catalytic domains of the enzyme. The first step, catalyzed by peptidyl alpha-hydroxylating monooxygenase (PHM) domain, is the copper-, ascorbate-, and O2- dependent stereospecific hydroxylation (with S stereochemistry) at the alpha-carbon (C-alpha) of the C-terminal glycine of the peptidylglycine substrate. The second step, catalyzed by the peptidylglycine amidoglycolate lyase (PAL) domain, is the zinc-dependent cleavage of the N-C-alpha bond, producing the alpha-amidated peptide and glyoxylate. The protein is Peptidyl-glycine alpha-amidating monooxygenase B (pam-b) of Xenopus laevis (African clawed frog).